Consider the following 704-residue polypeptide: Plasma membrane ATPase 2 (704 aa).

A helical transmembrane segment spans residues 1–16 (CSIAVGMIIEIIVMYP). The Extracellular portion of the chain corresponds to 17–26 (IQHRKYRPGI). Residues 27–48 (DNLLVLLIGGIPIAMPTVLSVT) form a helical membrane-spanning segment. Topologically, residues 49–395 (MAIGSHRLAQ…TSRAIFQRMK (347 aa)) are cytoplasmic. D81 serves as the catalytic 4-aspartylphosphate intermediate. Mg(2+) is bound by residues D340 and D344. The helical transmembrane segment at 396 to 417 (NYTIYAVSITIRIVLGFMLLAL) threads the bilayer. Over 418-422 (IWKFD) the chain is Extracellular. Residues 423–445 (FPPFMVLIIAILNDGTIMTISKD) form a helical membrane-spanning segment. The Cytoplasmic portion of the chain corresponds to 446 to 461 (RVKPSPLPDSWKLAEI). The chain crosses the membrane as a helical span at residues 462–482 (FTTGVVLGGYLAMMTVIFFWA). Topologically, residues 483-507 (AYETQFFPRVFGVSTLQRTATDDFR) are extracellular. A helical membrane pass occupies residues 508 to 528 (KLASAIYLQVSTISQALIFVT). Residues 529–540 (RSRSWSFVERPG) lie on the Cytoplasmic side of the membrane. Residues 541–561 (LLLVVALIVAQLVATLIAVYA) form a helical membrane-spanning segment. Over 562–570 (SWSFAAIEG) the chain is Extracellular. The helical transmembrane segment at 571–591 (IGWGWAGVIWLYNLVFYFPLD) threads the bilayer. Topologically, residues 592–704 (IIKFLIRYAL…IETIQQSYTV (113 aa)) are cytoplasmic.

This sequence belongs to the cation transport ATPase (P-type) (TC 3.A.3) family. Type IIIA subfamily. As to quaternary structure, possibly exists as a homodimer or a homotrimer.

The protein localises to the cell membrane. The catalysed reaction is ATP + H2O + H(+)(in) = ADP + phosphate + 2 H(+)(out). Its function is as follows. The plasma membrane ATPase of plants and fungi is a hydrogen ion pump. The proton gradient it generates drives the active transport of nutrients by H(+)-symport. The resulting external acidification and/or internal alkinization may mediate growth responses. This Solanum lycopersicum (Tomato) protein is Plasma membrane ATPase 2 (LHA2).